We begin with the raw amino-acid sequence, 467 residues long: Endolysin PlyTW (467 aa).

The region spanning 4–141 (LKQAESYIKS…DYTGITHFIR (138 aa)) is the Peptidase C51 domain. Ca(2+) contacts are provided by Asp-20 and Asp-22. Cys-29 acts as the For endopeptidase activity in catalysis. Position 31 (Asp-31) interacts with Ca(2+). Catalysis depends on for endopeptidase activity residues His-92 and Glu-112. Residues 148–169 (SSVKKKDTKKKPKPSNRDGINK) are disordered. One can recognise an N-acetylmuramoyl-L-alanine amidase domain in the interval 189–311 (NPVGVILHND…MEYYQTACPH (123 aa)). Zn(2+) is bound by residues His-196, His-301, and Cys-309. In terms of domain architecture, SH3b spans 385 to 455 (SESATFKCTA…WMPVRTWDKN (71 aa)).

The protein belongs to the N-acetylmuramoyl-L-alanine amidase 2 family. Zn(2+) serves as cofactor.

The enzyme catalyses Hydrolyzes the link between N-acetylmuramoyl residues and L-amino acid residues in certain cell-wall glycopeptides.. In terms of biological role, endolysin that degrades host peptidoglycans and participates in the sequential events which lead to the programmed host cell lysis releasing the mature viral particles. The CHAP activity cleaves the peptidic bond between the D-alanine of the tetra-peptide stem and the first glycine of the penta-glycine cross-bridge. The N-acetyl-muramidase activity cleaves between N-acetylmuramic acid and N-acetylglucosamine bonds. The protein is Endolysin PlyTW (plyTW) of Twortvirus twort (Bacteriophage Twort).